The chain runs to 55 residues: Large ribosomal subunit protein bL33 (55 aa).

It belongs to the bacterial ribosomal protein bL33 family.

This chain is Large ribosomal subunit protein bL33, found in Novosphingobium aromaticivorans (strain ATCC 700278 / DSM 12444 / CCUG 56034 / CIP 105152 / NBRC 16084 / F199).